Consider the following 60-residue polypeptide: Large ribosomal subunit protein bL32 (60 aa).

Residues 1 to 21 (MAVQQNKKSPSKRGMHRAHNA) form a disordered region. Over residues 9-19 (SPSKRGMHRAH) the composition is skewed to basic residues.

The protein belongs to the bacterial ribosomal protein bL32 family.

This chain is Large ribosomal subunit protein bL32, found in Albidiferax ferrireducens (strain ATCC BAA-621 / DSM 15236 / T118) (Rhodoferax ferrireducens).